A 133-amino-acid chain; its full sequence is Small ribosomal subunit protein uS11 (133 aa).

Belongs to the universal ribosomal protein uS11 family. In terms of assembly, part of the 30S ribosomal subunit. Interacts with proteins S7 and S18. Binds to IF-3.

Functionally, located on the platform of the 30S subunit, it bridges several disparate RNA helices of the 16S rRNA. Forms part of the Shine-Dalgarno cleft in the 70S ribosome. The chain is Small ribosomal subunit protein uS11 from Brevibacillus brevis (strain 47 / JCM 6285 / NBRC 100599).